A 957-amino-acid chain; its full sequence is MYGSARTITNLEGSPSRSPRLPRSPRLGHRRTSSGGGGGTGKTLSMENIQSLNAAYATSGPMYLSDHEGVASTTYPKGTMTLGRATNRAVYGGRVTAMGSSPNIASAGLSHTDVLSYTDQHGGLTGSSHHHHHQVPSMLRQVRDSTMLDLQAQLKELQRENDLLRKELDIKDSKLGSSMNSIKTFWSPELKKERVLRKEEAARMSVLKEQMRVSHEENQHLQLTIQALQDELRTQRDLNHLLQQESGNRGAEHFTIELTEENFRRLQAEHDRQAKELFLLRKTLEEMELRIETQKQTLNARDESIKKLLEMLQSKGLPSKSLEDDNERTRRMAEAESQVSHLEVILDQKEKENIHLREELHRRSQLQPEPAKTKALQTVIEMKDTKIASLERNIRDLEDEIQMLKANGVLNTEDREEEIKQIEVYKSHSKFMKTKIDQLKQELSKKESELLALQTKLETLSNQNSDCKQHIEVLKESLTAKEQRAAILQTEVDALRLRLEEKESFLNKKTKQLQDLTEEKGTLAGEIRDMKDMLEVKERKINVLQKKIENLQEQLRDKDKQLTNLKDRVKSLQTDSSNTDTALATLEEALSEKERIIERLKEQRERDDRERLEEIESFRKENKDLKEKVNALQAELTEKESSLIDLKEHASSLASAGLKRDSKLKSLEIAIEQKKEECSKLEAQLKKAHNIEDDSRMNPEFADQIKQLDKEASYYRDECGKAQAEVDRLLEILKEVENEKNDKDKKIAELESLTLRHMKDQNKKVANLKHNQQLEKKKNAQLLEEVRRREDSMADNSQHLQIEELMNALEKTRQELDATKARLASTQQSLAEKEAHLANLRIERRKQLEEILEMKQEALLAAISEKDANIALLELSASKKKKTQEEVMALKREKDRLVHQLKQQTQNRMKLMADNYDDDHHHYHHHHHHHHHRSPGRSQHSNHRPSPDQDDEEGIWA.

The span at 1–13 (MYGSARTITNLEG) shows a compositional bias: polar residues. A disordered region spans residues 1–44 (MYGSARTITNLEGSPSRSPRLPRSPRLGHRRTSSGGGGGTGKTL). Over residues 14–25 (SPSRSPRLPRSP) the composition is skewed to low complexity. Phosphoserine is present on residues S65 and S666. Positions 140-917 (RQVRDSTMLD…RMKLMADNYD (778 aa)) form a coiled coil. A disordered region spans residues 918–957 (DDHHHYHHHHHHHHHRSPGRSQHSNHRPSPDQDDEEGIWA). Basic residues predominate over residues 922-943 (HYHHHHHHHHHRSPGRSQHSNH). A compositionally biased stretch (acidic residues) spans 948–957 (DQDDEEGIWA).

As to quaternary structure, interacts with BSN, ERC1, PPFIA1, PPFIA2, PPFIA3 and PPFIA4. Interacts through its C-terminus with the PDZ domain of RIMS1. Part of a complex consisting of ERC2, RIMS1 and UNC13A.

It localises to the cytoplasm. Its subcellular location is the synapse. The protein resides in the presynaptic active zone. The protein localises to the cytoskeleton. Thought to be involved in the organization of the cytomatrix at the nerve terminals active zone (CAZ) which regulates neurotransmitter release. Seems to act together with BSN. May recruit liprin-alpha proteins to the CAZ. In Homo sapiens (Human), this protein is ERC protein 2 (ERC2).